Here is a 556-residue protein sequence, read N- to C-terminus: Urocanate hydratase (556 aa).

Residues 52–53, Gln-130, 176–178, Glu-196, Arg-201, 242–243, 263–267, 273–274, and Tyr-322 each bind NAD(+); these read GG, GMG, NA, QTSAH, and YL. The active site involves Cys-410. An NAD(+)-binding site is contributed by Gly-492.

The protein belongs to the urocanase family. Requires NAD(+) as cofactor.

It is found in the cytoplasm. It catalyses the reaction 4-imidazolone-5-propanoate = trans-urocanate + H2O. It participates in amino-acid degradation; L-histidine degradation into L-glutamate; N-formimidoyl-L-glutamate from L-histidine: step 2/3. In terms of biological role, catalyzes the conversion of urocanate to 4-imidazolone-5-propionate. The polypeptide is Urocanate hydratase (Shewanella sp. (strain MR-7)).